The chain runs to 338 residues: tRNA N6-adenosine threonylcarbamoyltransferase (338 aa).

Residues histidine 111 and histidine 115 each coordinate Fe cation. Residues 134–138, aspartate 167, glycine 180, and asparagine 275 each bind substrate; that span reads LLSGG. A Fe cation-binding site is contributed by aspartate 304.

It belongs to the KAE1 / TsaD family. It depends on Fe(2+) as a cofactor.

The protein resides in the cytoplasm. The enzyme catalyses L-threonylcarbamoyladenylate + adenosine(37) in tRNA = N(6)-L-threonylcarbamoyladenosine(37) in tRNA + AMP + H(+). In terms of biological role, required for the formation of a threonylcarbamoyl group on adenosine at position 37 (t(6)A37) in tRNAs that read codons beginning with adenine. Is involved in the transfer of the threonylcarbamoyl moiety of threonylcarbamoyl-AMP (TC-AMP) to the N6 group of A37, together with TsaE and TsaB. TsaD likely plays a direct catalytic role in this reaction. This is tRNA N6-adenosine threonylcarbamoyltransferase from Leptospira borgpetersenii serovar Hardjo-bovis (strain JB197).